Reading from the N-terminus, the 204-residue chain is Urease accessory protein UreG (204 aa).

11–18 is a binding site for GTP; it reads GPVGAGKH.

It belongs to the SIMIBI class G3E GTPase family. UreG subfamily. In terms of assembly, homodimer. UreD, UreF and UreG form a complex that acts as a GTP-hydrolysis-dependent molecular chaperone, activating the urease apoprotein by helping to assemble the nickel containing metallocenter of UreC. The UreE protein probably delivers the nickel.

Its subcellular location is the cytoplasm. Functionally, facilitates the functional incorporation of the urease nickel metallocenter. This process requires GTP hydrolysis, probably effectuated by UreG. The chain is Urease accessory protein UreG from Staphylococcus xylosus.